A 342-amino-acid chain; its full sequence is Ribosomal RNA small subunit methyltransferase C (342 aa).

Belongs to the methyltransferase superfamily. RsmC family. Monomer.

It localises to the cytoplasm. It carries out the reaction guanosine(1207) in 16S rRNA + S-adenosyl-L-methionine = N(2)-methylguanosine(1207) in 16S rRNA + S-adenosyl-L-homocysteine + H(+). Specifically methylates the guanine in position 1207 of 16S rRNA in the 30S particle. This Shewanella sp. (strain MR-4) protein is Ribosomal RNA small subunit methyltransferase C.